The sequence spans 131 residues: Single-stranded DNA-binding protein 2 (131 aa).

In terms of domain architecture, SSB spans 1 to 103; it reads MYNKVIMIGR…VLASSFQLLE (103 aa). The Important for interaction with partner proteins motif lies at 126-131; sequence EEELPF.

Homotetramer.

Functionally, plays an important role in DNA replication, recombination and repair. Binds to ssDNA and to an array of partner proteins to recruit them to their sites of action during DNA metabolism. The chain is Single-stranded DNA-binding protein 2 (ssb2) from Streptococcus agalactiae serotype III (strain NEM316).